The chain runs to 135 residues: MESFGEQLRALREERKLTVNQLATYSGVSAAGISRIENGKRGVPKPATIKKLAEALKIPYEGLMYKAGYIEEVHEARAPYETKCKLLEKAEAYDLKNLALLENEKWQYLNKEDLLMLDHYFSFISDEAKKRSADD.

The 56-residue stretch at 8–63 (LRALREERKLTVNQLATYSGVSAAGISRIENGKRGVPKPATIKKLAEALKIPYEGL) folds into the HTH cro/C1-type domain. The H-T-H motif DNA-binding region spans 19–38 (VNQLATYSGVSAAGISRIEN).

Represses the expression of yvaM and both rapG and rapH. Binds directly to the promoter regions of yvaM, rapG and rapH. This is HTH-type transcriptional repressor RghR (rghR) from Bacillus subtilis (strain 168).